A 938-amino-acid polypeptide reads, in one-letter code: Leucine--tRNA ligase 1 (938 aa).

Positions 40 to 50 (PYTNSPLHIGH) match the 'HIGH' region motif. The 'KMSKS' region motif lies at 620-624 (KMSKS). K623 is an ATP binding site.

The protein belongs to the class-I aminoacyl-tRNA synthetase family.

Its subcellular location is the cytoplasm. It catalyses the reaction tRNA(Leu) + L-leucine + ATP = L-leucyl-tRNA(Leu) + AMP + diphosphate. The polypeptide is Leucine--tRNA ligase 1 (Metallosphaera sedula (strain ATCC 51363 / DSM 5348 / JCM 9185 / NBRC 15509 / TH2)).